Consider the following 557-residue polypeptide: Protein PNS1 (557 aa).

Positions 1–58 (MSTEKQYQPQQPPPAYTGQGPDNGNAYGYPESYGKTETHSGDSCSGDTSMNPQQQGQQ) are disordered. Residues 1–99 (MSTEKQYQPQ…DNNKPKFNDW (99 aa)) are Cytoplasmic-facing. Residues 41–58 (GDSCSGDTSMNPQQQGQQ) are compositionally biased toward polar residues. A helical transmembrane segment spans residues 100 to 120 (PFIIVFLLTLCGFIVVASLTL). At 121–147 (RAWSQTYSSTGSGIYHDFDTGTLNTNS) the chain is on the extracellular side. A helical transmembrane segment spans residues 148–168 (VILLVFSVVIAIFFAFIGIVL). At 169-174 (CRAYPK) the chain is on the cytoplasmic side. A helical membrane pass occupies residues 175-195 (FFIYAGMIVNILAALGTAIMY). Residues 196-200 (MSLKY) lie on the Extracellular side of the membrane. A helical transmembrane segment spans residues 201–221 (WSAGIVFLIFTFMTAWCYWGM). At 222–246 (RSRIPLTVAILRVIVLAMKNCPQSL) the chain is on the cytoplasmic side. The helical transmembrane segment at 247–267 (FVSFFGTIVASAFAMLFSTVV) threads the bilayer. The Extracellular segment spans residues 268–292 (VATYMKYDPSNTNSGCNVSGGDCSH). The N-linked (GlcNAc...) asparagine glycan is linked to Asn284. The chain crosses the membrane as a helical span at residues 293–313 (AKLIGVLVVVFFCGYYISEVI). The Cytoplasmic portion of the chain corresponds to 314-350 (RNVMHCTVSGVFGSWYYRYKSDQGMPKWPAMGAFKRA). The chain crosses the membrane as a helical span at residues 351-371 (MTYSFGSICFGSLIVSIIETF). Residues 372–393 (RQLLQLGKQAAIASTDNANWIR) are Extracellular-facing. Residues 394-414 (IIFWLIDMLVGFIQWIAQYFN) form a helical membrane-spanning segment. The Cytoplasmic segment spans residues 415 to 454 (HYAYCIIALYGKPYLKAAKQTWYMFREKGIDALINDNLVN). The chain crosses the membrane as a helical span at residues 455–475 (VALGFYSLFASYMSCLFAFLY). At 476–488 (LRFTKPGYNSDGD) the chain is on the extracellular side. The chain crosses the membrane as a helical span at residues 489 to 509 (FNAPLMAFAFVIALQLTNIAN). The Cytoplasmic segment spans residues 510–557 (ETIRSGCATFFTALGHDPEVFQAQYPDRFDEIFRSYPQVLNKLTHQDV).

This sequence belongs to the CTL (choline transporter-like) family.

The protein localises to the cell membrane. Probably involved in transport through the plasma membrane. The sequence is that of Protein PNS1 (PNS1) from Candida glabrata (strain ATCC 2001 / BCRC 20586 / JCM 3761 / NBRC 0622 / NRRL Y-65 / CBS 138) (Yeast).